Consider the following 603-residue polypeptide: Autophagy-related protein 13a (603 aa).

At Ser-248 the chain carries Phosphoserine. 2 disordered regions span residues 258–477 (PSPG…DDLD) and 498–518 (SHSL…PLGR). Positions 301-315 (ATPNQSFSPAQSHQL) are enriched in polar residues. Residues 320–331 (HDFHWSRTDAFG) show a composition bias toward basic and acidic residues. Composition is skewed to polar residues over residues 371 to 386 (IPSS…SNFS) and 419 to 437 (SSRS…PTQK). Positions 453–473 (LSSSDSPRFAFSRSPSRLSSQ) are enriched in low complexity.

The protein belongs to the ATG13 family. Plant subfamily. In terms of assembly, interacts with ATG1A. Interacts with ATG11 and ATG101. Phosphorylated during nutrient starvation. Dephosphorylated in nutrient-rich conditions.

It is found in the cytoplasmic vesicle. The protein localises to the autophagosome. Involved in autophagy in a nutritional condition dependent manner. The ATG1-ATG13 protein kinase complex regulates downstream events required for autophagosome enclosure and/or vacuolar delivery. Becomes a target of autophagy under nutrient starvation. Connects autophagy to plant nutritional status. This Arabidopsis thaliana (Mouse-ear cress) protein is Autophagy-related protein 13a.